The primary structure comprises 224 residues: MAIHEWPEGERPREKLLALGASALSDAELLAIFLRVGVKGRSAVDLARDLLLAFGGLRPLLEADLARFCAEHGLGEAKYVQLQASLELSRRHLGSLLERGAALTSPTLVRRFLTSQLRHLPHEAFAALFLDTQHRVIRFETLSKGTLDSASVYPREVSRRALALNAGALIFAHNHPSGVAEPSDADRRITQRLSDALGLFDIRVLDHFVVGDGEVVSFAERGWL.

One can recognise an MPN domain in the interval 102-224; sequence ALTSPTLVRR…VVSFAERGWL (123 aa). Positions 173, 175, and 186 each coordinate Zn(2+). Positions 173–186 match the JAMM motif motif; sequence HNHPSGVAEPSDAD.

It belongs to the UPF0758 family.

The protein is UPF0758 protein Csal_2972 of Chromohalobacter salexigens (strain ATCC BAA-138 / DSM 3043 / CIP 106854 / NCIMB 13768 / 1H11).